Here is a 162-residue protein sequence, read N- to C-terminus: Transcription elongation factor GreA (162 aa).

Residues 48 to 76 (NSEYQSAKDEQAFVEGRVKQLQQMIQFAQ) are a coiled coil. The disordered stretch occupies residues 111–132 (GSAESDPLSGKISNDSPMGKAL).

The protein belongs to the GreA/GreB family.

In terms of biological role, necessary for efficient RNA polymerase transcription elongation past template-encoded arresting sites. The arresting sites in DNA have the property of trapping a certain fraction of elongating RNA polymerases that pass through, resulting in locked ternary complexes. Cleavage of the nascent transcript by cleavage factors such as GreA or GreB allows the resumption of elongation from the new 3'terminus. GreA releases sequences of 2 to 3 nucleotides. This chain is Transcription elongation factor GreA, found in Oenococcus oeni (strain ATCC BAA-331 / PSU-1).